Reading from the N-terminus, the 203-residue chain is N-(5'-phosphoribosyl)anthranilate isomerase (203 aa).

This sequence belongs to the TrpF family.

The enzyme catalyses N-(5-phospho-beta-D-ribosyl)anthranilate = 1-(2-carboxyphenylamino)-1-deoxy-D-ribulose 5-phosphate. Its pathway is amino-acid biosynthesis; L-tryptophan biosynthesis; L-tryptophan from chorismate: step 3/5. The sequence is that of N-(5'-phosphoribosyl)anthranilate isomerase from Caldanaerobacter subterraneus subsp. tengcongensis (strain DSM 15242 / JCM 11007 / NBRC 100824 / MB4) (Thermoanaerobacter tengcongensis).